Here is a 237-residue protein sequence, read N- to C-terminus: Indole-3-glycerol phosphate synthase (237 aa).

Belongs to the TrpC family.

It carries out the reaction 1-(2-carboxyphenylamino)-1-deoxy-D-ribulose 5-phosphate + H(+) = (1S,2R)-1-C-(indol-3-yl)glycerol 3-phosphate + CO2 + H2O. It participates in amino-acid biosynthesis; L-tryptophan biosynthesis; L-tryptophan from chorismate: step 4/5. The protein is Indole-3-glycerol phosphate synthase of Thermoplasma volcanium (strain ATCC 51530 / DSM 4299 / JCM 9571 / NBRC 15438 / GSS1).